The following is a 189-amino-acid chain: uncharacterized protein (189 aa).

This sequence to M.jannaschii MJ1461.

This is an uncharacterized protein from Methanocaldococcus jannaschii (strain ATCC 43067 / DSM 2661 / JAL-1 / JCM 10045 / NBRC 100440) (Methanococcus jannaschii).